Here is a 471-residue protein sequence, read N- to C-terminus: Methyltransferase OMS1, mitochondrial (471 aa).

Residues 1 to 39 (MIVFRRFPTCLLHHIRQPASRSLLLESQRRSLSFTSYKY) constitute a mitochondrion transit peptide. Over 40 to 103 (NSSHIDDDKS…AIARSEKFSK (64 aa)) the chain is Mitochondrial matrix. The chain crosses the membrane as a helical span at residues 104–123 (GMTKYMIGAYVIFLIYGLFF). Topologically, residues 124-471 (TKKLFAKDKE…LEPVPPVSKS (348 aa)) are mitochondrial intermembrane. Basic and acidic residues predominate over residues 450–463 (FEKKDDMASKKELE). The disordered stretch occupies residues 450-471 (FEKKDDMASKKELEPVPPVSKS).

The protein belongs to the methyltransferase superfamily. METL family.

The protein resides in the mitochondrion inner membrane. Mitochondrial methyltransferase which suppresses respiratory defects caused by OXA1 mutations when overexpressed. The polypeptide is Methyltransferase OMS1, mitochondrial (OMS1) (Saccharomyces cerevisiae (strain ATCC 204508 / S288c) (Baker's yeast)).